The sequence spans 314 residues: Probable 2-(5''-triphosphoribosyl)-3'-dephosphocoenzyme-A synthase (314 aa).

It belongs to the CitG/MdcB family.

It carries out the reaction 3'-dephospho-CoA + ATP = 2'-(5''-triphospho-alpha-D-ribosyl)-3'-dephospho-CoA + adenine. In Photobacterium profundum (strain SS9), this protein is Probable 2-(5''-triphosphoribosyl)-3'-dephosphocoenzyme-A synthase.